Here is a 204-residue protein sequence, read N- to C-terminus: Large ribosomal subunit protein uL4 (204 aa).

Residues 53–77 form a disordered region; sequence ISDVSGTTAKPYSQKRTGRARQGSL. The segment covering 56 to 67 has biased composition (polar residues); it reads VSGTTAKPYSQK.

It belongs to the universal ribosomal protein uL4 family. As to quaternary structure, part of the 50S ribosomal subunit.

Its function is as follows. One of the primary rRNA binding proteins, this protein initially binds near the 5'-end of the 23S rRNA. It is important during the early stages of 50S assembly. It makes multiple contacts with different domains of the 23S rRNA in the assembled 50S subunit and ribosome. Forms part of the polypeptide exit tunnel. This chain is Large ribosomal subunit protein uL4, found in Wolbachia sp. subsp. Brugia malayi (strain TRS).